The following is a 194-amino-acid chain: Dof zinc finger protein DOF4.2 (194 aa).

The Dof-type zinc-finger motif lies at Arg-21–Leu-75. Zn(2+) is bound by residues Cys-23, Cys-26, Cys-48, and Cys-51.

The protein localises to the nucleus. In terms of biological role, transcription factor that binds specifically to a 5'-AA[AG]G-3' consensus core sequence. The sequence is that of Dof zinc finger protein DOF4.2 (DOF4.2) from Arabidopsis thaliana (Mouse-ear cress).